Here is a 335-residue protein sequence, read N- to C-terminus: Aspartate carbamoyltransferase catalytic subunit (335 aa).

Residues Arg54 and Thr55 each contribute to the carbamoyl phosphate site. Lys82 is an L-aspartate binding site. Arg104, His134, and Gln137 together coordinate carbamoyl phosphate. L-aspartate-binding residues include Arg177 and Arg232. Residues Gly277 and Pro278 each coordinate carbamoyl phosphate.

This sequence belongs to the aspartate/ornithine carbamoyltransferase superfamily. ATCase family. In terms of assembly, heterododecamer (2C3:3R2) of six catalytic PyrB chains organized as two trimers (C3), and six regulatory PyrI chains organized as three dimers (R2).

The catalysed reaction is carbamoyl phosphate + L-aspartate = N-carbamoyl-L-aspartate + phosphate + H(+). Its pathway is pyrimidine metabolism; UMP biosynthesis via de novo pathway; (S)-dihydroorotate from bicarbonate: step 2/3. Catalyzes the condensation of carbamoyl phosphate and aspartate to form carbamoyl aspartate and inorganic phosphate, the committed step in the de novo pyrimidine nucleotide biosynthesis pathway. In Paenarthrobacter aurescens (strain TC1), this protein is Aspartate carbamoyltransferase catalytic subunit.